Consider the following 541-residue polypeptide: Chaperonin GroEL (541 aa).

ATP-binding positions include 30–33 (TLGP), lysine 51, 87–91 (DGTTT), glycine 415, and aspartate 495.

Belongs to the chaperonin (HSP60) family. As to quaternary structure, forms a cylinder of 14 subunits composed of two heptameric rings stacked back-to-back. Interacts with the co-chaperonin GroES.

It is found in the cytoplasm. The enzyme catalyses ATP + H2O + a folded polypeptide = ADP + phosphate + an unfolded polypeptide.. Its function is as follows. Together with its co-chaperonin GroES, plays an essential role in assisting protein folding. The GroEL-GroES system forms a nano-cage that allows encapsulation of the non-native substrate proteins and provides a physical environment optimized to promote and accelerate protein folding. In Pantoea ananas (Erwinia uredovora), this protein is Chaperonin GroEL.